Reading from the N-terminus, the 337-residue chain is Phenylalanine--tRNA ligase alpha subunit (337 aa).

A Mg(2+)-binding site is contributed by Glu-258.

This sequence belongs to the class-II aminoacyl-tRNA synthetase family. Phe-tRNA synthetase alpha subunit type 1 subfamily. Tetramer of two alpha and two beta subunits. Mg(2+) is required as a cofactor.

The protein resides in the cytoplasm. It carries out the reaction tRNA(Phe) + L-phenylalanine + ATP = L-phenylalanyl-tRNA(Phe) + AMP + diphosphate + H(+). This chain is Phenylalanine--tRNA ligase alpha subunit, found in Burkholderia mallei (strain ATCC 23344).